Here is a 301-residue protein sequence, read N- to C-terminus: uncharacterized protein (301 aa).

3 residues coordinate a divalent metal cation: glutamate 146, glutamate 148, and aspartate 177.

The protein belongs to the FAH family.

This is an uncharacterized protein from Staphylococcus saprophyticus subsp. saprophyticus (strain ATCC 15305 / DSM 20229 / NCIMB 8711 / NCTC 7292 / S-41).